The sequence spans 368 residues: Cytochrome b (368 aa).

A run of 4 helical transmembrane segments spans residues 25 to 45 (FGSM…FLAM), 69 to 90 (WIMQ…YIHI), 105 to 125 (WLSG…GYVL), and 170 to 190 (FFAL…IHII). 2 residues coordinate heme b: H75 and H89. Heme b is bound by residues H174 and H188. H193 contacts a ubiquinone. A run of 4 helical transmembrane segments spans residues 218-238 (YKDM…MSFT), 280-300 (LGGT…PFTH), 312-332 (LTQT…WTAT), and 339-358 (FIFI…IINP).

It belongs to the cytochrome b family. As to quaternary structure, the cytochrome bc1 complex contains 3 respiratory subunits (MT-CYB, CYC1 and UQCRFS1), 2 core proteins (UQCRC1 and UQCRC2) and probably 6 low-molecular weight proteins. It depends on heme b as a cofactor.

The protein resides in the mitochondrion inner membrane. Its function is as follows. Component of the ubiquinol-cytochrome c reductase complex (complex III or cytochrome b-c1 complex) that is part of the mitochondrial respiratory chain. The b-c1 complex mediates electron transfer from ubiquinol to cytochrome c. Contributes to the generation of a proton gradient across the mitochondrial membrane that is then used for ATP synthesis. The polypeptide is Cytochrome b (MT-CYB) (Notechis ater (Black tiger snake)).